We begin with the raw amino-acid sequence, 262 residues long: Phosphoribosyl 1,2-cyclic phosphate 1,2-diphosphodiesterase (262 aa).

Positions 6, 8, 13, 38, 63, 76, 193, 245, and 247 each coordinate Mn(2+).

Belongs to the PHP family. Requires Mn(2+) as cofactor.

It carries out the reaction alpha-D-ribose 1,2-cyclic phosphate 5-phosphate + H2O = D-ribose 2,5-bisphosphate + H(+). The enzyme catalyses D-ribose 2,5-bisphosphate + H2O = D-ribose 5-phosphate + phosphate. Its function is as follows. Involved in degradation of methylphosphonate. Catalyzes the hydrolysis of the phosphate ester at carbon-1 of 5-phospho-D-ribose 1,2-cyclic phosphate to form ribose 2,5-bisphosphate. This intermediate is then hydrolyzed to ribose-5-phosphate and inorganic phosphate. This Eggerthella lenta (strain ATCC 25559 / DSM 2243 / CCUG 17323 / JCM 9979 / KCTC 3265 / NCTC 11813 / VPI 0255 / 1899 B) (Eubacterium lentum) protein is Phosphoribosyl 1,2-cyclic phosphate 1,2-diphosphodiesterase.